Reading from the N-terminus, the 596-residue chain is Elongation factor 4 (596 aa).

The region spanning Lys2–Glu184 is the tr-type G domain. GTP is bound by residues Asp14 to Thr19 and Asn131 to Asp134.

Belongs to the TRAFAC class translation factor GTPase superfamily. Classic translation factor GTPase family. LepA subfamily.

It localises to the cell inner membrane. It carries out the reaction GTP + H2O = GDP + phosphate + H(+). Its function is as follows. Required for accurate and efficient protein synthesis under certain stress conditions. May act as a fidelity factor of the translation reaction, by catalyzing a one-codon backward translocation of tRNAs on improperly translocated ribosomes. Back-translocation proceeds from a post-translocation (POST) complex to a pre-translocation (PRE) complex, thus giving elongation factor G a second chance to translocate the tRNAs correctly. Binds to ribosomes in a GTP-dependent manner. This chain is Elongation factor 4, found in Shewanella oneidensis (strain ATCC 700550 / JCM 31522 / CIP 106686 / LMG 19005 / NCIMB 14063 / MR-1).